Here is a 134-residue protein sequence, read N- to C-terminus: DNA-binding protein H-NS homolog (134 aa).

A disordered region spans residues 106 to 134 (HKTWTGQGRTPRPIQNALNKGKSLSDFEI). A DNA-binding region spans residues 112–117 (QGRTPR).

It belongs to the histone-like protein H-NS family. In terms of assembly, homodimer that oligomerizes on DNA into higher-order complexes that form bridges between disparate regions of DNA compacting it.

The protein localises to the cytoplasm. Its subcellular location is the nucleoid. In terms of biological role, a DNA-binding protein implicated in transcriptional repression and chromosome organization and compaction. Binds nucleation sites in AT-rich DNA and bridges them, forming higher-order nucleoprotein complexes and condensing the chromosome. As many horizontally transferred genes are AT-rich, it plays a central role in silencing foreign genes. A subset of genes are repressed by H-NS in association with other proteins. The protein is DNA-binding protein H-NS homolog (hns) of Haemophilus influenzae (strain ATCC 51907 / DSM 11121 / KW20 / Rd).